A 347-amino-acid polypeptide reads, in one-letter code: MAEGSEKVPIARAGPEDVEQGLPPAYTAAVPPPGPGRLLKAGATVLIAGALLLLAGAIGAFYFWKATERQVYNVHYTMSINGKVQDGSMEIDAGNNLETFKTGSGSEEAVEVHDFQIGITGIRFAGGEKCYIKAQPKARVPEVDAMTKASLSSDLEDEIMPVRFDENSLIWVAADEPIKHNGFLSPKILELCGDLPIFWLRPTYPKDKQRERREMKRNKRQSESNFDAEHRAAAAEEVNTRSTPTQLTQDLGPQSNETRPMQQESDQTLNPDNPYNQLEGEGMAFDPMLDHLGVCCIECRRSYTQCQRICEPLLGYYPWPYNYQGCRTACRIIMPCSWWVARIMGVV.

A disordered region spans residues 1–29 (MAEGSEKVPIARAGPEDVEQGLPPAYTAA). Residues 45-65 (VLIAGALLLLAGAIGAFYFWK) traverse the membrane as a helical segment. The BRICHOS domain maps to 103–200 (GSGSEEAVEV…LCGDLPIFWL (98 aa)). Cys130 and Cys192 are disulfide-bonded. The interval 208-281 (KQRERREMKR…DNPYNQLEGE (74 aa)) is disordered. Positions 210 to 213 (RERR) are excised as a propeptide. Positions 240 to 276 (TRSTPTQLTQDLGPQSNETRPMQQESDQTLNPDNPYN) are enriched in polar residues. A glycan (N-linked (GlcNAc...) asparagine) is linked at Asn256. 4 cysteine pairs are disulfide-bonded: Cys295/Cys299, Cys296/Cys336, Cys306/Cys330, and Cys310/Cys326.

This sequence belongs to the chondromodulin-1 family. Post-translationally, after cleavage, the post-translationally modified ChM-I is secreted as a glycoprotein. In terms of tissue distribution, expressed in the cartilage and in fetal precartilaginous tissues as well as in heart and eye.

It localises to the secreted. It is found in the extracellular space. Its subcellular location is the extracellular matrix. The protein localises to the endomembrane system. In terms of biological role, bifunctional growth regulator. May contribute to the rapid growth of cartilage and vascular invasion prior to the replacement of cartilage by bone during endochondral bone development. Plays a role as antiangiogenic factor in cardiac valves to suppress neovascularization. The sequence is that of Leukocyte cell-derived chemotaxin 1 from Gallus gallus (Chicken).